Here is a 428-residue protein sequence, read N- to C-terminus: tRNA modification GTPase MnmE (428 aa).

R20, E77, and K117 together coordinate (6S)-5-formyl-5,6,7,8-tetrahydrofolate. The TrmE-type G domain occupies 213–351 (GFEIALVGAP…LLEKIRSVFS (139 aa)). N223 is a K(+) binding site. GTP is bound by residues 223–228 (NAGKST), 242–248 (SEIAGTT), and 267–270 (DTAG). Residue S227 coordinates Mg(2+). S242, I244, and T247 together coordinate K(+). T248 contributes to the Mg(2+) binding site. Position 428 (K428) interacts with (6S)-5-formyl-5,6,7,8-tetrahydrofolate.

Belongs to the TRAFAC class TrmE-Era-EngA-EngB-Septin-like GTPase superfamily. TrmE GTPase family. Homodimer. Heterotetramer of two MnmE and two MnmG subunits. Requires K(+) as cofactor.

The protein localises to the cytoplasm. Its function is as follows. Exhibits a very high intrinsic GTPase hydrolysis rate. Involved in the addition of a carboxymethylaminomethyl (cmnm) group at the wobble position (U34) of certain tRNAs, forming tRNA-cmnm(5)s(2)U34. This Roseobacter denitrificans (strain ATCC 33942 / OCh 114) (Erythrobacter sp. (strain OCh 114)) protein is tRNA modification GTPase MnmE.